Consider the following 304-residue polypeptide: Glucose-6-phosphate isomerase (304 aa).

Glutamate 146 acts as the Proton donor in catalysis. Histidine 177 is a catalytic residue.

The protein belongs to the GPI family.

The protein localises to the cytoplasm. The enzyme catalyses alpha-D-glucose 6-phosphate = beta-D-fructose 6-phosphate. It participates in carbohydrate degradation; glycolysis; D-glyceraldehyde 3-phosphate and glycerone phosphate from D-glucose: step 2/4. The chain is Glucose-6-phosphate isomerase (PGI) from Calanus finmarchicus (Calanus tonsus).